The chain runs to 264 residues: MKIALGIEYDGSRYYGWQRQQEVKSVQGCLEEALSKVADEPISVFCAGRTDAGVHATGQVVHFETSVQRKDAAWTMGVNVHLPPDIAVRWVKTVDEGFHARFSATARRYRYIIFNHRYRPAVLANGVTHFHYPLDEKRMHQAAQCILGENDFTSFRAVQCQSKTPWRNVMHINVNRYGHYVVIDIKANAFVHHMVRNIAGSLMEIGCGNQDINWMAQLLALKDRAKAAATAKAAGLYLVAVDYPVQFDLPCAVMGPLFLADDLI.

Asp51 acts as the Nucleophile in catalysis. Tyr109 contributes to the substrate binding site.

The protein belongs to the tRNA pseudouridine synthase TruA family. In terms of assembly, homodimer.

The enzyme catalyses uridine(38/39/40) in tRNA = pseudouridine(38/39/40) in tRNA. In terms of biological role, formation of pseudouridine at positions 38, 39 and 40 in the anticodon stem and loop of transfer RNAs. This is tRNA pseudouridine synthase A from Photorhabdus laumondii subsp. laumondii (strain DSM 15139 / CIP 105565 / TT01) (Photorhabdus luminescens subsp. laumondii).